Reading from the N-terminus, the 303-residue chain is Probable serine/threonine-protein kinase FPV212 (303 aa).

Residues 25–303 (WILGKQLGSG…NYESLKQMFL (279 aa)) form the Protein kinase domain. ATP-binding positions include 31-39 (LGSGGFGLV) and lysine 54. Catalysis depends on aspartate 160, which acts as the Proton acceptor.

It belongs to the protein kinase superfamily. Ser/Thr protein kinase family. Poxviruses subfamily.

It catalyses the reaction L-seryl-[protein] + ATP = O-phospho-L-seryl-[protein] + ADP + H(+). The catalysed reaction is L-threonyl-[protein] + ATP = O-phospho-L-threonyl-[protein] + ADP + H(+). In Vertebrata (FPV), this protein is Probable serine/threonine-protein kinase FPV212.